Consider the following 3590-residue polypeptide: Filamentous hemagglutinin (3590 aa).

Disordered stretches follow at residues 3256 to 3309 (GGGS…VEVS) and 3417 to 3498 (APPP…GRHV). Over residues 3289–3299 (PSRPTTPPASP) the composition is skewed to pro residues. The segment covering 3300–3309 (QPIRATVEVS) has biased composition (low complexity). Pro residues predominate over residues 3417–3432 (APPPVVETAQPLPPVK).

The protein resides in the cell surface. Its function is as follows. Evidence for a role in host-cell binding and infection. This chain is Filamentous hemagglutinin (fhaB), found in Bordetella pertussis (strain Tohama I / ATCC BAA-589 / NCTC 13251).